Reading from the N-terminus, the 280-residue chain is Phosphatidylserine decarboxylase proenzyme (280 aa).

Residues aspartate 88, histidine 144, and serine 247 each act as charge relay system; for autoendoproteolytic cleavage activity in the active site. The Schiff-base intermediate with substrate; via pyruvic acid; for decarboxylase activity role is filled by serine 247. Serine 247 carries the pyruvic acid (Ser); by autocatalysis modification.

Belongs to the phosphatidylserine decarboxylase family. PSD-B subfamily. Prokaryotic type I sub-subfamily. In terms of assembly, heterodimer of a large membrane-associated beta subunit and a small pyruvoyl-containing alpha subunit. Pyruvate serves as cofactor. Is synthesized initially as an inactive proenzyme. Formation of the active enzyme involves a self-maturation process in which the active site pyruvoyl group is generated from an internal serine residue via an autocatalytic post-translational modification. Two non-identical subunits are generated from the proenzyme in this reaction, and the pyruvate is formed at the N-terminus of the alpha chain, which is derived from the carboxyl end of the proenzyme. The autoendoproteolytic cleavage occurs by a canonical serine protease mechanism, in which the side chain hydroxyl group of the serine supplies its oxygen atom to form the C-terminus of the beta chain, while the remainder of the serine residue undergoes an oxidative deamination to produce ammonia and the pyruvoyl prosthetic group on the alpha chain. During this reaction, the Ser that is part of the protease active site of the proenzyme becomes the pyruvoyl prosthetic group, which constitutes an essential element of the active site of the mature decarboxylase.

Its subcellular location is the cell membrane. It catalyses the reaction a 1,2-diacyl-sn-glycero-3-phospho-L-serine + H(+) = a 1,2-diacyl-sn-glycero-3-phosphoethanolamine + CO2. It participates in phospholipid metabolism; phosphatidylethanolamine biosynthesis; phosphatidylethanolamine from CDP-diacylglycerol: step 2/2. In terms of biological role, catalyzes the formation of phosphatidylethanolamine (PtdEtn) from phosphatidylserine (PtdSer). This is Phosphatidylserine decarboxylase proenzyme from Xanthomonas euvesicatoria pv. vesicatoria (strain 85-10) (Xanthomonas campestris pv. vesicatoria).